The sequence spans 105 residues: Thioredoxin (105 aa).

Positions 1–105 (MANNVMDSSF…SLLDWINKSI (105 aa)) constitute a Thioredoxin domain. Cys-30 and Cys-33 are disulfide-bonded.

The protein belongs to the thioredoxin family.

In terms of biological role, component of the thioredoxin-thioredoxin reductase system. Participates in various redox reactions through the reversible oxidation of its active center dithiol to a disulfide and catalyzes dithiol-disulfide exchange reactions. The sequence is that of Thioredoxin (trxA) from Rickettsia conorii (strain ATCC VR-613 / Malish 7).